Consider the following 185-residue polypeptide: Biofilm operon icaADBC HTH-type negative transcriptional regulator IcaR (185 aa).

One can recognise an HTH tetR-type domain in the interval 1–59 (MKDKIIDNAITLFSEKGYDGTTLDDISKSVNIKKASLYYHYDNKEEIYRKSVENCFNYF). Residues 22–41 (TLDDISKSVNIKKASLYYHY) constitute a DNA-binding region (H-T-H motif).

As to quaternary structure, homodimer.

In terms of biological role, represses transcription of the icaADBC operon necessary for biofilm production. This chain is Biofilm operon icaADBC HTH-type negative transcriptional regulator IcaR (icaR), found in Staphylococcus epidermidis (strain ATCC 35984 / DSM 28319 / BCRC 17069 / CCUG 31568 / BM 3577 / RP62A).